The sequence spans 337 residues: Phenylalanine--tRNA ligase alpha subunit (337 aa).

Glu-258 provides a ligand contact to Mg(2+).

Belongs to the class-II aminoacyl-tRNA synthetase family. Phe-tRNA synthetase alpha subunit type 1 subfamily. As to quaternary structure, tetramer of two alpha and two beta subunits. Mg(2+) serves as cofactor.

The protein resides in the cytoplasm. It catalyses the reaction tRNA(Phe) + L-phenylalanine + ATP = L-phenylalanyl-tRNA(Phe) + AMP + diphosphate + H(+). The chain is Phenylalanine--tRNA ligase alpha subunit from Paraburkholderia phytofirmans (strain DSM 17436 / LMG 22146 / PsJN) (Burkholderia phytofirmans).